We begin with the raw amino-acid sequence, 81 residues long: UPF0180 protein BLi01634/BL05144 (81 aa).

The protein belongs to the UPF0180 family.

The polypeptide is UPF0180 protein BLi01634/BL05144 (Bacillus licheniformis (strain ATCC 14580 / DSM 13 / JCM 2505 / CCUG 7422 / NBRC 12200 / NCIMB 9375 / NCTC 10341 / NRRL NRS-1264 / Gibson 46)).